The chain runs to 128 residues: Large ribosomal subunit protein bL12 (128 aa).

It belongs to the bacterial ribosomal protein bL12 family. Homodimer. Part of the ribosomal stalk of the 50S ribosomal subunit. Forms a multimeric L10(L12)X complex, where L10 forms an elongated spine to which 2 to 4 L12 dimers bind in a sequential fashion. Binds GTP-bound translation factors.

Forms part of the ribosomal stalk which helps the ribosome interact with GTP-bound translation factors. Is thus essential for accurate translation. The chain is Large ribosomal subunit protein bL12 from Corynebacterium glutamicum (strain R).